The sequence spans 290 residues: Phosphatidylglycerol--prolipoprotein diacylglyceryl transferase (290 aa).

The next 7 membrane-spanning stretches (helical) occupy residues 21-41 (VSLH…MWLA), 60-80 (LLYA…VLFY), 96-116 (WDGG…MLWF), 124-144 (FFQV…AGRL), 199-219 (SQLY…NLFI), 226-246 (GSVS…VECF), and 259-279 (VISM…IMMI). Arginine 143 serves as a coordination point for a 1,2-diacyl-sn-glycero-3-phospho-(1'-sn-glycerol).

Belongs to the Lgt family.

Its subcellular location is the cell inner membrane. The catalysed reaction is L-cysteinyl-[prolipoprotein] + a 1,2-diacyl-sn-glycero-3-phospho-(1'-sn-glycerol) = an S-1,2-diacyl-sn-glyceryl-L-cysteinyl-[prolipoprotein] + sn-glycerol 1-phosphate + H(+). It functions in the pathway protein modification; lipoprotein biosynthesis (diacylglyceryl transfer). Its function is as follows. Catalyzes the transfer of the diacylglyceryl group from phosphatidylglycerol to the sulfhydryl group of the N-terminal cysteine of a prolipoprotein, the first step in the formation of mature lipoproteins. The protein is Phosphatidylglycerol--prolipoprotein diacylglyceryl transferase of Yersinia enterocolitica serotype O:8 / biotype 1B (strain NCTC 13174 / 8081).